Here is a 354-residue protein sequence, read N- to C-terminus: Uroporphyrinogen decarboxylase (354 aa).

Residues 30–34 (RQAGR), Phe49, Asp79, Tyr156, Ser211, and His326 each bind substrate.

The protein belongs to the uroporphyrinogen decarboxylase family. In terms of assembly, homodimer.

The protein localises to the cytoplasm. The enzyme catalyses uroporphyrinogen III + 4 H(+) = coproporphyrinogen III + 4 CO2. Its pathway is porphyrin-containing compound metabolism; protoporphyrin-IX biosynthesis; coproporphyrinogen-III from 5-aminolevulinate: step 4/4. Functionally, catalyzes the decarboxylation of four acetate groups of uroporphyrinogen-III to yield coproporphyrinogen-III. This Salinibacter ruber (strain DSM 13855 / M31) protein is Uroporphyrinogen decarboxylase.